The following is an 882-amino-acid chain: Lon protease homolog, mitochondrial (882 aa).

The N-terminal 34 residues, M1–Y34, are a transit peptide targeting the mitochondrion. Positions T68–R281 constitute a Lon N-terminal domain. G435–T442 is an ATP binding site. The region spanning P687 to S878 is the Lon proteolytic domain. Residues S784 and K827 contribute to the active site.

This sequence belongs to the peptidase S16 family. As to quaternary structure, homohexamer or homoheptamer. Organized in a ring with a central cavity.

It is found in the mitochondrion matrix. The enzyme catalyses Hydrolysis of proteins in presence of ATP.. In terms of biological role, ATP-dependent serine protease that mediates the selective degradation of misfolded, unassembled or oxidatively damaged polypeptides as well as certain short-lived regulatory proteins in the mitochondrial matrix. May also have a chaperone function in the assembly of inner membrane protein complexes. Participates in the regulation of mitochondrial gene expression and in the maintenance of the integrity of the mitochondrial genome. Binds to mitochondrial DNA in a site-specific manner. The protein is Lon protease homolog, mitochondrial of Phaeodactylum tricornutum (strain CCAP 1055/1).